Here is a 242-residue protein sequence, read N- to C-terminus: tRNA1(Val) (adenine(37)-N6)-methyltransferase (242 aa).

It belongs to the methyltransferase superfamily. tRNA (adenine-N(6)-)-methyltransferase family.

Its subcellular location is the cytoplasm. The catalysed reaction is adenosine(37) in tRNA1(Val) + S-adenosyl-L-methionine = N(6)-methyladenosine(37) in tRNA1(Val) + S-adenosyl-L-homocysteine + H(+). In terms of biological role, specifically methylates the adenine in position 37 of tRNA(1)(Val) (anticodon cmo5UAC). In Mannheimia succiniciproducens (strain KCTC 0769BP / MBEL55E), this protein is tRNA1(Val) (adenine(37)-N6)-methyltransferase.